The following is a 1025-amino-acid chain: Beta-galactosidase (1025 aa).

Substrate contacts are provided by N105 and D204. Residue D204 coordinates Na(+). The Mg(2+) site is built by E417, H419, and E462. Residues E462 and 538–541 (EYAH) each bind substrate. The active-site Proton donor is the E462. The active-site Nucleophile is E538. N598 contributes to the Mg(2+) binding site. Residues F602 and N605 each coordinate Na(+). N605 and W1003 together coordinate substrate.

It belongs to the glycosyl hydrolase 2 family. Homotetramer. Mg(2+) is required as a cofactor. The cofactor is Na(+).

The enzyme catalyses Hydrolysis of terminal non-reducing beta-D-galactose residues in beta-D-galactosides.. In Aeromonas hydrophila subsp. hydrophila (strain ATCC 7966 / DSM 30187 / BCRC 13018 / CCUG 14551 / JCM 1027 / KCTC 2358 / NCIMB 9240 / NCTC 8049), this protein is Beta-galactosidase.